Consider the following 300-residue polypeptide: TLR adapter interacting with SLC15A4 on the lysosome (300 aa).

Positions 289-293 match the pLxIS motif motif; the sequence is SLHIS. Ser293 carries the post-translational modification Phosphoserine.

In terms of assembly, interacts (via pLxIS motif) with IRF5; leading to IRF5 activation. Interacts with SLC15A4; leading to its recruitment to endolysosome. Post-translationally, the phosphorylated pLxIS motif constitutes an IRF5-binding motif, leading to recruitment of the transcription factor IRF5 to induce type-I interferons and other cytokines.

Its subcellular location is the lysosome membrane. It localises to the endosome membrane. The protein resides in the nucleus. The protein localises to the cytoplasm. Its function is as follows. Innate immune adapter that mediates the recruitment and activation of IRF5 downstream of endolysosomal toll-like receptors TLR7, TLR8 and TLR9. Following recruitment to endolysosome by SLC15A4 downstream of TLR7, TLR8 and TLR9, specifically recruits IRF5 transcription factor via its pLxIS motif, leading to IRF5 activation and subsequent expression of type I interferons. Plays a role in the regulation of endolysosomal pH in immune cells such as B-cells, dendritic cells and monocytes. This Bos taurus (Bovine) protein is TLR adapter interacting with SLC15A4 on the lysosome.